Reading from the N-terminus, the 105-residue chain is Small ribosomal subunit protein uS10 (105 aa).

This sequence belongs to the universal ribosomal protein uS10 family. In terms of assembly, part of the 30S ribosomal subunit.

Its function is as follows. Involved in the binding of tRNA to the ribosomes. The chain is Small ribosomal subunit protein uS10 from Maridesulfovibrio salexigens (strain ATCC 14822 / DSM 2638 / NCIMB 8403 / VKM B-1763) (Desulfovibrio salexigens).